We begin with the raw amino-acid sequence, 264 residues long: MRIALGIEYNGTNYFGWQRQREVKSVQEELEKALSIVANHPVEVQCAGRTDAGVHGTGQVVHFDTNVNRKMVAWTMGANANMPSDIAVRWAKEVPDDFHARFSATARRYRYIIFNHALRPGILNSGVSHYHGELDEKKMHEAGQYLLGENDFSSFRAAHCQSLSPCRNLMHLNVTRHGDYVVIDIKANAFVHHMVRNITGSLIKVGRGEEKPEWIKWLLEAKDRKLAGATAKAEGLYLVDVDYPEEFELPCVPIGPLFLPDNLN.

The active-site Nucleophile is Asp-51. Tyr-109 provides a ligand contact to substrate.

The protein belongs to the tRNA pseudouridine synthase TruA family. As to quaternary structure, homodimer.

The enzyme catalyses uridine(38/39/40) in tRNA = pseudouridine(38/39/40) in tRNA. Functionally, formation of pseudouridine at positions 38, 39 and 40 in the anticodon stem and loop of transfer RNAs. The sequence is that of tRNA pseudouridine synthase A from Vibrio parahaemolyticus serotype O3:K6 (strain RIMD 2210633).